We begin with the raw amino-acid sequence, 50 residues long: Sperm protamine P1 (50 aa).

Cystine bridges form between C7–C15 and C38–C46.

The protein belongs to the protamine P1 family. As to quaternary structure, cross-linked by interchain disulfide bonds around the DNA-helix. In terms of tissue distribution, testis.

Its subcellular location is the nucleus. It is found in the chromosome. Its function is as follows. Protamines substitute for histones in the chromatin of sperm during the haploid phase of spermatogenesis. They compact sperm DNA into a highly condensed, stable and inactive complex. In Equus caballus (Horse), this protein is Sperm protamine P1 (PRM1).